The primary structure comprises 526 residues: MKQCTRQCILIIDFGSQYTQLLLRRIRELGIYAKVCDWNISQDLLVSLNPNGIIFSGGPDSVTNKHSSSISKVVFKIGVPILGICYGMQILVSQCGGNIRSVSNKGEFGYAQVEILSQKNTLIGNLYDYINDQGHCVLEVWMSHKDIVETMPQGFTVIGITENQQIAIIINEKCRWYGIQFHPEVTHTKKGKDILKRFAVDICRCEVTWKPVYIVKNIIKTIKKVVGQDRVVLAFSGGIDSLVTALLLKYAINHEQFVCVFVNNGLLCCNEINRISNFCKKYQDLNIIHLSEEKRFLSALTGVIDPEEKRKIIGKIFVEIFQAQISQLKNIKWLAQGTIYSDVIESGMSCASANIIKSHHNVGGFPSSVNIQLLEPIKDLFKDEVRNIGLYLGLPLNVVNQYPCPGPGMAIRILGEVREEYCNILRRVDYIFMEELNKSDLYNTVDQAFAVFLPVQSVGVQGDQRKYKWVIVLRAIETEDFMTAQWVRLPYTFLNKVSNRIVNEVEEVSRVVYDISCKPPATIEWE.

The 201-residue stretch at 8–208 folds into the Glutamine amidotransferase type-1 domain; the sequence is CILIIDFGSQ…AVDICRCEVT (201 aa). Catalysis depends on cysteine 85, which acts as the Nucleophile. Active-site residues include histidine 182 and glutamate 184. The GMPS ATP-PPase domain maps to 209-401; that stretch reads WKPVYIVKNI…LGLPLNVVNQ (193 aa). 236 to 242 is a binding site for ATP; the sequence is SGGIDSL.

In terms of assembly, homodimer.

It carries out the reaction XMP + L-glutamine + ATP + H2O = GMP + L-glutamate + AMP + diphosphate + 2 H(+). The protein operates within purine metabolism; GMP biosynthesis; GMP from XMP (L-Gln route): step 1/1. In terms of biological role, catalyzes the synthesis of GMP from XMP. The protein is GMP synthase [glutamine-hydrolyzing] of Blochmanniella floridana.